The primary structure comprises 219 residues: Cytochrome b6 (219 aa).

A helical membrane pass occupies residues I32–F52. C35 contributes to the heme c binding site. Heme b contacts are provided by H86 and H100. The next 3 membrane-spanning stretches (helical) occupy residues S90–F110, L116–Y136, and A190–I210. Positions 191 and 206 each coordinate heme b.

It belongs to the cytochrome b family. PetB subfamily. In terms of assembly, the 4 large subunits of the cytochrome b6-f complex are cytochrome b6, subunit IV (17 kDa polypeptide, PetD), cytochrome f and the Rieske protein, while the 4 small subunits are PetG, PetL, PetM and PetN. The complex functions as a dimer. Heme b is required as a cofactor. The cofactor is heme c.

The protein resides in the plastid. The protein localises to the chloroplast thylakoid membrane. In terms of biological role, component of the cytochrome b6-f complex, which mediates electron transfer between photosystem II (PSII) and photosystem I (PSI), cyclic electron flow around PSI, and state transitions. The protein is Cytochrome b6 of Amphidinium operculatum (Dinoflagellate).